Reading from the N-terminus, the 86-residue chain is Toxin Aam3 (86 aa).

Residues 1–19 (MNYLVMISLALLFMIGVES) form the signal peptide. Residues 21–85 (RDGYIAQPNN…PIKIIGQKCT (65 aa)) form the LCN-type CS-alpha/beta domain. Disulfide bonds link Cys31–Cys84, Cys35–Cys56, Cys42–Cys66, and Cys46–Cys68.

The protein belongs to the long (4 C-C) scorpion toxin superfamily. Sodium channel inhibitor family. Alpha subfamily. In terms of processing, the C-terminal basic residue is removed by a carboxypeptidase. Expressed by the venom gland.

It localises to the secreted. Its function is as follows. Alpha toxins bind voltage-independently at site-3 of sodium channels (Nav) and inhibit the inactivation of the activated channels, thereby blocking neuronal transmission. This Androctonus amoreuxi (African fattail scorpion) protein is Toxin Aam3.